The sequence spans 469 residues: tRNA modification GTPase MnmE (469 aa).

3 residues coordinate (6S)-5-formyl-5,6,7,8-tetrahydrofolate: Arg-38, Glu-95, and Arg-134. A TrmE-type G domain is found at 230-392; it reads GIRVALVGPP…LRRGLAALVD (163 aa). GTP-binding positions include 240-245, 259-265, and 284-287; these read NAGKSS, SAQAGTT, and DTAG. Mg(2+)-binding residues include Ser-244 and Thr-265. Residue Lys-468 participates in (6S)-5-formyl-5,6,7,8-tetrahydrofolate binding.

It belongs to the TRAFAC class TrmE-Era-EngA-EngB-Septin-like GTPase superfamily. TrmE GTPase family. In terms of assembly, homodimer. Heterotetramer of two MnmE and two MnmG subunits. Requires K(+) as cofactor.

Its subcellular location is the cytoplasm. Its function is as follows. Exhibits a very high intrinsic GTPase hydrolysis rate. Involved in the addition of a carboxymethylaminomethyl (cmnm) group at the wobble position (U34) of certain tRNAs, forming tRNA-cmnm(5)s(2)U34. This chain is tRNA modification GTPase MnmE, found in Halorhodospira halophila (strain DSM 244 / SL1) (Ectothiorhodospira halophila (strain DSM 244 / SL1)).